A 513-amino-acid polypeptide reads, in one-letter code: Xylose import ATP-binding protein XylG (513 aa).

2 ABC transporter domains span residues 5 to 242 (LEMK…VGRE) and 259 to 505 (LRIE…LRSE). ATP is bound at residue 37 to 44 (GENGSGKS).

This sequence belongs to the ABC transporter superfamily. Xylose importer (TC 3.A.1.2.4) family. In terms of assembly, the complex is composed of two ATP-binding proteins (XylG), two transmembrane proteins (XylH) and a solute-binding protein (XylF).

The protein localises to the cell inner membrane. The enzyme catalyses D-xylose(out) + ATP + H2O = D-xylose(in) + ADP + phosphate + H(+). Part of the ABC transporter complex XylFGH involved in xylose import. Responsible for energy coupling to the transport system. This Escherichia coli O6:K15:H31 (strain 536 / UPEC) protein is Xylose import ATP-binding protein XylG.